Here is a 290-residue protein sequence, read N- to C-terminus: Transmembrane protein 33 homolog (290 aa).

2 disordered regions span residues 1–22 (MSSP…EFTG) and 39–72 (IDPN…SPRA). Residues 45–72 (SSNNTTTQRPSTSSSSRTSSSSTSSPRA) are compositionally biased toward low complexity. The next 4 helical transmembrane spans lie at 83–103 (LYGA…FYFI), 109–129 (FFYK…FNTF), 150–170 (FVFY…YLLP), and 218–238 (IVLI…LVFI).

It belongs to the PER33/POM33 family.

It localises to the membrane. The protein is Transmembrane protein 33 homolog (tmem33) of Dictyostelium discoideum (Social amoeba).